The primary structure comprises 263 residues: MEAHLDWYGVPGLQEASDACPRESCSSALPEAREGANVHFPPHPVPREHFSCAAPELVAGAQGLNASLMDGGALPRLMPTSSGVAGACAARRRQASPELLRCSRRRRSGATEASSSSAAVARRNERERNRVKLVNLGFQALRQHVPHGGANKKLSKVETLRSAVEYIRALQRLLAEHDAVRAALAGGLLTPATPPSDECAQPSASPASASLSCASTSPSPDRLGCSEPTSPRSAYSSEESSCEGELSPMEQELLDFSSWLGGY.

Disordered regions lie at residues 104-126 and 194-248; these read RRRRSGATEASSSSAAVARRNER and PPSD…ELSP. Low complexity-rich tracts occupy residues 110-121, 202-220, and 230-247; these read ATEASSSSAAVA, PSASPASASLSCASTSPSP, and SPRSAYSSEESSCEGELS. One can recognise a bHLH domain in the interval 118-170; sequence AAVARRNERERNRVKLVNLGFQALRQHVPHGGANKKLSKVETLRSAVEYIRAL.

As to quaternary structure, efficient DNA binding requires dimerization with another basic helix-loop-helix (bHLH) protein. Forms heterodimers with bHLH transcription factor TCF3. May not heterodimerise with bHLH protein HAND1. In terms of tissue distribution, expressed in follicular T-helper (Tfh) cells.

The protein resides in the nucleus. Its function is as follows. Transcription factor. Binds to E-box motifs 5'-CANNTG-3' in the regulatory elements of target genes, probably as a heterodimer with another basic helix-loop-helix (bHLH) protein such as the transcription factor TCF3. May bind both open and closed chromatin, acting as a pioneer transcription factor to allow other factors to bind and activate lineage-specific genes. Required during post-implantation development for the generation of some differentiated trophoblast cell types. Transcriptional activity of ASCL2 may be antagonised in a subset of trophoblast cells by bHLH transcription factor HAND1, perhaps by competing for dimerization with other bHLH proteins. Involved in differentiation and function of follicular T-helper (Tfh) cells, thereby playing a role in germinal center responses; probably modulates expression of genes involved in Tfh cell function, such as BCL6. May also act as a suppressor of Th1-, Th2- and Th17-cell differentiation. Induces the formation of stem cells in intestinal crypts in vitro, synergistically activating transcription of target genes, such as SOX9, together with TCF4/beta-catenin. May form a bistable transcriptional switch, controlling expression of its own gene together with Wnt/R-spondin signaling, and thereby maintaining stem cell characteristics. Modulates expression of target genes, including perhaps down-regulating EGR1/Krox24 and chemokine CXCL10/Mob-1 and up-regulating CXCR4 and CDKN1C/p57kip2, in Schwann cells. May play a role in reducing proliferation of Schwann cells, perhaps acting via modulation of expression of CDKN1C. May be dispensable for blastocyst formation and later embryonic function. May be involved in the determination of neuronal precursors. The polypeptide is Achaete-scute homolog 2 (Ascl2) (Mus musculus (Mouse)).